Here is a 504-residue protein sequence, read N- to C-terminus: Maturase K (504 aa).

It belongs to the intron maturase 2 family. MatK subfamily.

It is found in the plastid. It localises to the chloroplast. Its function is as follows. Usually encoded in the trnK tRNA gene intron. Probably assists in splicing its own and other chloroplast group II introns. This is Maturase K from Betula papyrifera (Paper birch).